Here is a 116-residue protein sequence, read N- to C-terminus: Ribosome-binding factor A (116 aa).

It belongs to the RbfA family. As to quaternary structure, monomer. Binds 30S ribosomal subunits, but not 50S ribosomal subunits or 70S ribosomes.

The protein localises to the cytoplasm. One of several proteins that assist in the late maturation steps of the functional core of the 30S ribosomal subunit. Associates with free 30S ribosomal subunits (but not with 30S subunits that are part of 70S ribosomes or polysomes). Required for efficient processing of 16S rRNA. May interact with the 5'-terminal helix region of 16S rRNA. This chain is Ribosome-binding factor A, found in Levilactobacillus brevis (strain ATCC 367 / BCRC 12310 / CIP 105137 / JCM 1170 / LMG 11437 / NCIMB 947 / NCTC 947) (Lactobacillus brevis).